Here is a 510-residue protein sequence, read N- to C-terminus: MRALISVSDKEGVVEFAKGLEQLGWQIVSTGGTYKILNENGVKAVEVAQITQSPEMFEGRVKTLHPKIHGGILYKRDDASHVAQAKEFGIEGIDLVCVNLYPFKETTIRTDDFDEIIENIDIGGPAMVRSAAKNFKDVLIVTSVLDYDEILQRLKEGTDDLEFRRNLMIKAYEHTASYDATIANYMNERFKGGFGDARFIFGNKVFDTRYGENPHQKGALYEFEYFFTNNFRALKGEASFNNMTDINGAVMLATSFENAPVVAIVKHSNPCGLAVKDSLLESYVEALKCDPISAYGGVVAINGTLDRALARKINEIYVEVIIAANVDDDALAVFENKKRIKIFTQDNKFLVRAGDKFDFKHIDGGFVFQERDVVSDDELKNMKQMSKKHANENQLKDAQIAWKVAALTKSNCVVYVKDGAMVAIGMGMTSRVDAARAAVAKAKELDLDLHGCVLASEAFFPFRDSIDIASKVGVKCVIEPGGSIRDDEVIEAANEHGMSLYFTGVRHFLH.

The MGS-like domain maps to 1–142; that stretch reads MRALISVSDK…KNFKDVLIVT (142 aa).

This sequence belongs to the PurH family.

The enzyme catalyses (6R)-10-formyltetrahydrofolate + 5-amino-1-(5-phospho-beta-D-ribosyl)imidazole-4-carboxamide = 5-formamido-1-(5-phospho-D-ribosyl)imidazole-4-carboxamide + (6S)-5,6,7,8-tetrahydrofolate. It catalyses the reaction IMP + H2O = 5-formamido-1-(5-phospho-D-ribosyl)imidazole-4-carboxamide. It participates in purine metabolism; IMP biosynthesis via de novo pathway; 5-formamido-1-(5-phospho-D-ribosyl)imidazole-4-carboxamide from 5-amino-1-(5-phospho-D-ribosyl)imidazole-4-carboxamide (10-formyl THF route): step 1/1. It functions in the pathway purine metabolism; IMP biosynthesis via de novo pathway; IMP from 5-formamido-1-(5-phospho-D-ribosyl)imidazole-4-carboxamide: step 1/1. The polypeptide is Bifunctional purine biosynthesis protein PurH (Campylobacter curvus (strain 525.92)).